Reading from the N-terminus, the 46-residue chain is Large ribosomal subunit protein bL36B (46 aa).

Belongs to the bacterial ribosomal protein bL36 family.

The chain is Large ribosomal subunit protein bL36B from Cronobacter sakazakii (strain ATCC BAA-894) (Enterobacter sakazakii).